Reading from the N-terminus, the 421-residue chain is Zinc chaperone AztD (421 aa).

The N-terminal stretch at 1-29 (MMENIMKKRLLSTSISTLLLGLSVMPAFA) is a signal peptide. Zn(2+)-binding residues include H101, H104, D106, H126, H169, H216, and H405. Residues C212 and C229 are joined by a disulfide bond. Residues 399–421 (GGSGKVHGEHHDHEAHHHDDHAH) are disordered. Residues 404–421 (VHGEHHDHEAHHHDDHAH) are compositionally biased toward basic and acidic residues. Positions 408–419 (HHDHEAHHHDDH) match the N-terminal Zn(2+)-binding motif; binds a third Zn(2+) with low affinity motif.

Monomer.

It is found in the periplasm. Acts as a zinc chaperone in the AztABCD zinc transport system. Directly transfers one zinc cation to the solute binding protein AztC; the transfer occurs without the formation of a stable interaction. Binds 3 Zn(2+), two with high affinity and one with low affinity, and transfers only Zn(2+) bound to site 2 to AztC. This is Zinc chaperone AztD from Citrobacter koseri (strain ATCC BAA-895 / CDC 4225-83 / SGSC4696).